Here is a 700-residue protein sequence, read N- to C-terminus: Elongation factor G (700 aa).

The tr-type G domain maps to 8–290 (ERYRNIGISA…AVVEFMPSPV (283 aa)). GTP contacts are provided by residues 17–24 (AHIDAGKT), 88–92 (DTPGH), and 142–145 (NKMD).

The protein belongs to the TRAFAC class translation factor GTPase superfamily. Classic translation factor GTPase family. EF-G/EF-2 subfamily.

Its subcellular location is the cytoplasm. Catalyzes the GTP-dependent ribosomal translocation step during translation elongation. During this step, the ribosome changes from the pre-translocational (PRE) to the post-translocational (POST) state as the newly formed A-site-bound peptidyl-tRNA and P-site-bound deacylated tRNA move to the P and E sites, respectively. Catalyzes the coordinated movement of the two tRNA molecules, the mRNA and conformational changes in the ribosome. This Albidiferax ferrireducens (strain ATCC BAA-621 / DSM 15236 / T118) (Rhodoferax ferrireducens) protein is Elongation factor G.